We begin with the raw amino-acid sequence, 185 residues long: ATP synthase subunit b (185 aa).

The helical transmembrane segment at 26 to 46 (LVLIGFAILLFIVIKFVVPMF) threads the bilayer.

The protein belongs to the ATPase B chain family. As to quaternary structure, F-type ATPases have 2 components, F(1) - the catalytic core - and F(0) - the membrane proton channel. F(1) has five subunits: alpha(3), beta(3), gamma(1), delta(1), epsilon(1). F(0) has three main subunits: a(1), b(2) and c(10-14). The alpha and beta chains form an alternating ring which encloses part of the gamma chain. F(1) is attached to F(0) by a central stalk formed by the gamma and epsilon chains, while a peripheral stalk is formed by the delta and b chains.

It is found in the cell membrane. In terms of biological role, f(1)F(0) ATP synthase produces ATP from ADP in the presence of a proton or sodium gradient. F-type ATPases consist of two structural domains, F(1) containing the extramembraneous catalytic core and F(0) containing the membrane proton channel, linked together by a central stalk and a peripheral stalk. During catalysis, ATP synthesis in the catalytic domain of F(1) is coupled via a rotary mechanism of the central stalk subunits to proton translocation. Its function is as follows. Component of the F(0) channel, it forms part of the peripheral stalk, linking F(1) to F(0). In Renibacterium salmoninarum (strain ATCC 33209 / DSM 20767 / JCM 11484 / NBRC 15589 / NCIMB 2235), this protein is ATP synthase subunit b.